Reading from the N-terminus, the 553-residue chain is Methyl-coenzyme M reductase I subunit alpha (553 aa).

Position 150 (Q150) interacts with coenzyme F430. Coenzyme B is bound by residues R228, K259 to H260, and R273. A 5-methylarginine modification is found at R274. Positions 335 and 447 each coordinate coenzyme M.

The protein belongs to the methyl-coenzyme M reductase alpha subunit family. MCR is a hexamer of two alpha, two beta, and two gamma chains, forming a dimer of heterotrimers. Coenzyme F430 serves as cofactor. Post-translationally, is methylated on C5 of Arg-274 by the methyltransferase MJ0841. This post-translational methylation, despite being not essential in vivo, plays a role for the stability and structural integrity of MCR.

Its subcellular location is the cytoplasm. It catalyses the reaction coenzyme B + methyl-coenzyme M = methane + coenzyme M-coenzyme B heterodisulfide. The protein operates within one-carbon metabolism; methyl-coenzyme M reduction; methane from methyl-coenzyme M: step 1/1. In terms of biological role, component of the methyl-coenzyme M reductase (MCR) I that catalyzes the reductive cleavage of methyl-coenzyme M (CoM-S-CH3 or 2-(methylthio)ethanesulfonate) using coenzyme B (CoB or 7-mercaptoheptanoylthreonine phosphate) as reductant which results in the production of methane and the mixed heterodisulfide of CoB and CoM (CoM-S-S-CoB). This is the final step in methanogenesis. The chain is Methyl-coenzyme M reductase I subunit alpha (mcrA) from Methanocaldococcus jannaschii (strain ATCC 43067 / DSM 2661 / JAL-1 / JCM 10045 / NBRC 100440) (Methanococcus jannaschii).